The following is a 211-amino-acid chain: Large ribosomal subunit protein eL13 (211 aa).

An N6-acetyllysine modification is found at Lys16. Phosphoserine is present on residues Ser77 and Ser106. Glycyl lysine isopeptide (Lys-Gly) (interchain with G-Cter in SUMO2) cross-links involve residues Lys123 and Lys145. Residue Lys174 forms a Glycyl lysine isopeptide (Lys-Gly) (interchain with G-Cter in SUMO1); alternate linkage. Glycyl lysine isopeptide (Lys-Gly) (interchain with G-Cter in SUMO2); alternate cross-links involve residues Lys174 and Lys177. Position 177 is an N6-acetyllysine; alternate (Lys177).

It belongs to the eukaryotic ribosomal protein eL13 family. Component of the 60S large ribosomal subunit (LSU).

The protein localises to the cytoplasm. Component of the ribosome, a large ribonucleoprotein complex responsible for the synthesis of proteins in the cell. The small ribosomal subunit (SSU) binds messenger RNAs (mRNAs) and translates the encoded message by selecting cognate aminoacyl-transfer RNA (tRNA) molecules. The large subunit (LSU) contains the ribosomal catalytic site termed the peptidyl transferase center (PTC), which catalyzes the formation of peptide bonds, thereby polymerizing the amino acids delivered by tRNAs into a polypeptide chain. The nascent polypeptides leave the ribosome through a tunnel in the LSU and interact with protein factors that function in enzymatic processing, targeting, and the membrane insertion of nascent chains at the exit of the ribosomal tunnel. As part of the LSU, it is probably required for its formation and the maturation of rRNAs. Plays a role in bone development. The polypeptide is Large ribosomal subunit protein eL13 (RPL13) (Oryctolagus cuniculus (Rabbit)).